Reading from the N-terminus, the 454-residue chain is Tubulin beta-3 chain (454 aa).

Residues Q11, E75, S144, G148, T149, G150, N210, and N232 each coordinate GTP. E75 is a binding site for Mg(2+). Residues 435–454 (TADDEFDPEVNQEEVEGDCI) form a disordered region.

The protein belongs to the tubulin family. As to quaternary structure, dimer of alpha and beta chains. A typical microtubule is a hollow water-filled tube with an outer diameter of 25 nm and an inner diameter of 15 nM. Alpha-beta heterodimers associate head-to-tail to form protofilaments running lengthwise along the microtubule wall with the beta-tubulin subunit facing the microtubule plus end conferring a structural polarity. Microtubules usually have 13 protofilaments but different protofilament numbers can be found in some organisms and specialized cells. The cofactor is Mg(2+).

The protein resides in the cytoplasm. It is found in the cytoskeleton. Its function is as follows. Tubulin is the major constituent of microtubules, a cylinder consisting of laterally associated linear protofilaments composed of alpha- and beta-tubulin heterodimers. Microtubules grow by the addition of GTP-tubulin dimers to the microtubule end, where a stabilizing cap forms. Below the cap, tubulin dimers are in GDP-bound state, owing to GTPase activity of alpha-tubulin. This chain is Tubulin beta-3 chain (betaTub60D), found in Drosophila melanogaster (Fruit fly).